The primary structure comprises 796 residues: Protein translocase subunit SecA 2 (796 aa).

ATP contacts are provided by residues Q84, 102–106 (GEGKT), and D496.

This sequence belongs to the SecA family. In terms of assembly, monomer and homodimer (Potential). Part of the accessory SecA2/SecY2 protein translocation apparatus required to export cell wall protein SraP.

The protein localises to the cell membrane. It localises to the cytoplasm. The catalysed reaction is ATP + H2O + cellular proteinSide 1 = ADP + phosphate + cellular proteinSide 2.. In terms of biological role, part of the accessory SecA2/SecY2 system specifically required to export SraP, a serine-rich repeat cell wall protein encoded upstream in the same operon. In Staphylococcus aureus (strain NCTC 8325 / PS 47), this protein is Protein translocase subunit SecA 2.